A 209-amino-acid chain; its full sequence is Ribosomal RNA large subunit methyltransferase E (209 aa).

S-adenosyl-L-methionine contacts are provided by Gly60, Trp62, Asp80, Asp96, and Asp121. The Proton acceptor role is filled by Lys161.

Belongs to the class I-like SAM-binding methyltransferase superfamily. RNA methyltransferase RlmE family.

The protein resides in the cytoplasm. The catalysed reaction is uridine(2552) in 23S rRNA + S-adenosyl-L-methionine = 2'-O-methyluridine(2552) in 23S rRNA + S-adenosyl-L-homocysteine + H(+). Functionally, specifically methylates the uridine in position 2552 of 23S rRNA at the 2'-O position of the ribose in the fully assembled 50S ribosomal subunit. The protein is Ribosomal RNA large subunit methyltransferase E of Pseudomonas fluorescens (strain Pf0-1).